A 220-amino-acid polypeptide reads, in one-letter code: Demethylmenaquinone methyltransferase (220 aa).

S-adenosyl-L-methionine is bound by residues T47, D67, and 93 to 94 (DA).

Belongs to the class I-like SAM-binding methyltransferase superfamily. MenG/UbiE family.

The catalysed reaction is a 2-demethylmenaquinol + S-adenosyl-L-methionine = a menaquinol + S-adenosyl-L-homocysteine + H(+). It participates in quinol/quinone metabolism; menaquinone biosynthesis; menaquinol from 1,4-dihydroxy-2-naphthoate: step 2/2. In terms of biological role, methyltransferase required for the conversion of demethylmenaquinol (DMKH2) to menaquinol (MKH2). This chain is Demethylmenaquinone methyltransferase, found in Thermus thermophilus (strain ATCC BAA-163 / DSM 7039 / HB27).